Here is a 167-residue protein sequence, read N- to C-terminus: Dimethylamine corrinoid protein 3 (167 aa).

One can recognise a B12-binding N-terminal domain in the interval 1–44 (MNEVGVRFERGKLFLPHVMMAADAMTAGVNALKDLMPEGSASSK). In terms of domain architecture, B12-binding spans 45–167 (MGVIVNGTVE…AVTKAKELLA (123 aa)). H58 provides a ligand contact to methylcob(III)alamin.

The protein belongs to the methylamine corrinoid protein family.

It participates in one-carbon metabolism; methanogenesis from dimethylamine. In terms of biological role, acts as a methyl group carrier between MtbB and MtbA. In Methanosarcina mazei (strain ATCC BAA-159 / DSM 3647 / Goe1 / Go1 / JCM 11833 / OCM 88) (Methanosarcina frisia), this protein is Dimethylamine corrinoid protein 3 (mtbC3).